A 129-amino-acid chain; its full sequence is 8-oxo-dGTP diphosphatase (129 aa).

One can recognise a Nudix hydrolase domain in the interval 1 to 129 (MKKLQIAVGI…EPVIAKLKRL (129 aa)). Residues arginine 23, histidine 28, and 34–37 (EFPG) each bind 8-oxo-dGTP. Positions 37 and 57 each coordinate Mg(2+). A Nudix box motif is present at residues 38–59 (GKIEMGETPEQAVVRELQEEVG). An 8-oxo-dGTP-binding site is contributed by asparagine 119.

Belongs to the Nudix hydrolase family. In terms of assembly, monomer. It depends on Mg(2+) as a cofactor.

It catalyses the reaction 8-oxo-dGTP + H2O = 8-oxo-dGMP + diphosphate + H(+). It carries out the reaction 8-oxo-GTP + H2O = 8-oxo-GMP + diphosphate + H(+). The enzyme catalyses 8-oxo-dGDP + H2O = 8-oxo-dGMP + phosphate + H(+). The catalysed reaction is 8-oxo-GDP + H2O = 8-oxo-GMP + phosphate + H(+). Its function is as follows. Specifically hydrolyzes both 8-oxo-deoxyguanosine triphosphate (8-oxo-dGTP) and 8-oxo-guanosine triphosphate (8-oxo-GTP) to the related monophosphates, thereby cleaning up the nucleotide pools and preventing misincorporation of 8-oxoGua into DNA and RNA. It prevents replicational errors by removing an oxidatively damaged form of guanine (8-oxo-dGTP) from DNA and the nucleotide pool. 8-oxo-dGTP can be inserted opposite dA and dC residues of template DNA with almost equal efficiency thus leading to A.T to G.C transversions. MutT may also ensure transcriptional fidelity, removing 8-oxo-GTP from the ribonucleotide triphosphate pool. However, due to the lower efficiency of RNA polymerase 8-oxo-GTP incorporation, MutT is probably not a major contributor to transcriptional fidelity. It also hydrolyzes 8-oxo-dGDP and 8-oxo-GDP to their monophosphate form. In vitro, can also use dGTP, dGDP and other various nucleoside di- and triphosphates, with much lower efficiency. Works cooperatively with MutM and MutY to prevent accumulation in the DNA of oxidized guanine residues. The chain is 8-oxo-dGTP diphosphatase from Escherichia coli (strain K12).